We begin with the raw amino-acid sequence, 1023 residues long: Probable histidine kinase 3 (1023 aa).

Residues 1–80 (MDEMSCGGGG…RGWRVVRETW (80 aa)) lie on the Cytoplasmic side of the membrane. Residues 81–101 (WWVLLLWILAGSLGSFYLFLF) traverse the membrane as a helical segment. At 102-387 (MNAQSLDKRR…CRFEKKPPWP (286 aa)) the chain is on the extracellular side. Residues 151 to 352 (TPSAIDQMTF…TNESPISMYG (202 aa)) enclose the CHASE domain. A helical membrane pass occupies residues 388 to 408 (WLAITSSFGTLVIALLTGHIF). Residues 409–1023 (QATVHRIAKV…RFFQNHDQVE (615 aa)) are Cytoplasmic-facing. One can recognise a Histidine kinase domain in the interval 445-715 (TVSHEIRTPM…TFTFTAVLMR (271 aa)). Position 448 is a phosphohistidine; by autocatalysis (histidine 448). Response regulatory domains are found at residues 732–854 (NALV…RRAL) and 880–1016 (QIIV…ARFF). 4-aspartylphosphate is present on aspartate 783. The segment at 812–831 (LFLLGSSASSPKGGSDTSRE) is disordered. A compositionally biased stretch (polar residues) spans 817–827 (SSASSPKGGSD). The residue at position 930 (aspartate 930) is a 4-aspartylphosphate.

Post-translationally, activation probably requires a transfer of a phosphate group between a His in the transmitter domain and an Asp of the receiver domain.

It localises to the cell membrane. The enzyme catalyses ATP + protein L-histidine = ADP + protein N-phospho-L-histidine.. Cytokinin receptor related to bacterial two-component regulators. Functions as a histidine kinase and transmits the stress signal to a downstream MAPK cascade. The chain is Probable histidine kinase 3 from Oryza sativa subsp. indica (Rice).